The primary structure comprises 95 residues: Fatty acid-binding protein, liver (95 aa).

N6-succinyllysine is present on residues K13 and K18. A Phosphoserine modification is found at S21. N6-succinyllysine is present on K28. T33 is subject to Phosphothreonine. S38 is subject to Phosphoserine. An N6-succinyllysine mark is found at K39, K47, and K59. The residue at position 69 (S69) is a Phosphoserine. K90 is subject to N6-succinyllysine.

This sequence belongs to the calycin superfamily. Fatty-acid binding protein (FABP) family. As to quaternary structure, monomer.

It localises to the cytoplasm. In terms of biological role, this protein binds free fatty acids and their coenzyme A derivatives, bilirubin, and some other small molecules in the cytoplasm; it may be involved in intracellular lipid transport. This chain is Fatty acid-binding protein, liver (FABP1), found in Chaetophractus villosus (South American armadillo).